Here is a 353-residue protein sequence, read N- to C-terminus: Photosystem II D2 protein (353 aa).

T2 is modified (N-acetylthreonine). T2 is subject to Phosphothreonine. Residues 41–61 (CAYFALGGWFTGTTFVTSWYT) form a helical membrane-spanning segment. H118 provides a ligand contact to chlorophyll a. Residues 125-141 (GFMLRQFELSRSVQLRP) traverse the membrane as a helical segment. Residues Q130 and N143 each coordinate pheophytin a. The helical transmembrane segment at 153–166 (VFVSVFLIYPLGQS) threads the bilayer. A chlorophyll a-binding site is contributed by H198. A helical transmembrane segment spans residues 208-228 (AALLCAIHGATVENTLFEDGD). H215 and F262 together coordinate a plastoquinone. H215 contributes to the Fe cation binding site. H269 is a Fe cation binding site. A helical transmembrane segment spans residues 279 to 295 (GLWMSALGVVGLALNLR).

It belongs to the reaction center PufL/M/PsbA/D family. PSII is composed of 1 copy each of membrane proteins PsbA, PsbB, PsbC, PsbD, PsbE, PsbF, PsbH, PsbI, PsbJ, PsbK, PsbL, PsbM, PsbT, PsbX, PsbY, PsbZ, Psb30/Ycf12, at least 3 peripheral proteins of the oxygen-evolving complex and a large number of cofactors. It forms dimeric complexes. The cofactor is The D1/D2 heterodimer binds P680, chlorophylls that are the primary electron donor of PSII, and subsequent electron acceptors. It shares a non-heme iron and each subunit binds pheophytin, quinone, additional chlorophylls, carotenoids and lipids. There is also a Cl(-1) ion associated with D1 and D2, which is required for oxygen evolution. The PSII complex binds additional chlorophylls, carotenoids and specific lipids..

It localises to the plastid. The protein localises to the chloroplast thylakoid membrane. It catalyses the reaction 2 a plastoquinone + 4 hnu + 2 H2O = 2 a plastoquinol + O2. Functionally, photosystem II (PSII) is a light-driven water:plastoquinone oxidoreductase that uses light energy to abstract electrons from H(2)O, generating O(2) and a proton gradient subsequently used for ATP formation. It consists of a core antenna complex that captures photons, and an electron transfer chain that converts photonic excitation into a charge separation. The D1/D2 (PsbA/PsbD) reaction center heterodimer binds P680, the primary electron donor of PSII as well as several subsequent electron acceptors. D2 is needed for assembly of a stable PSII complex. The sequence is that of Photosystem II D2 protein from Arabis hirsuta (Hairy rock-cress).